Reading from the N-terminus, the 241-residue chain is NAD(P)H-hydrate epimerase (241 aa).

Residues 11–221 (AASLDKDLME…SIVEKYGLNC (211 aa)) enclose the YjeF N-terminal domain. 65-69 (NNGGD) contacts (6S)-NADPHX. K(+) is bound by residues Asn-66 and Asp-127. (6S)-NADPHX contacts are provided by residues 131 to 137 (GFSFGGP) and Asp-160. Residue Ser-163 coordinates K(+).

This sequence belongs to the NnrE/AIBP family. K(+) is required as a cofactor.

The protein resides in the cytoplasm. It localises to the mitochondrion. The catalysed reaction is (6R)-NADHX = (6S)-NADHX. It carries out the reaction (6R)-NADPHX = (6S)-NADPHX. Catalyzes the epimerization of the S- and R-forms of NAD(P)HX, a damaged form of NAD(P)H that is a result of enzymatic or heat-dependent hydration. This is a prerequisite for the S-specific NAD(P)H-hydrate dehydratase to allow the repair of both epimers of NAD(P)HX. The sequence is that of NAD(P)H-hydrate epimerase from Aspergillus fumigatus (strain ATCC MYA-4609 / CBS 101355 / FGSC A1100 / Af293) (Neosartorya fumigata).